A 255-amino-acid chain; its full sequence is Type III pantothenate kinase (255 aa).

Aspartate 6–valine 13 lines the ATP pocket. Residue glycine 107–cysteine 110 participates in substrate binding. Aspartate 109 serves as the catalytic Proton acceptor. Residue aspartate 129 participates in K(+) binding. Threonine 132 provides a ligand contact to ATP. Position 184 (threonine 184) interacts with substrate.

This sequence belongs to the type III pantothenate kinase family. Homodimer. The cofactor is NH4(+). K(+) is required as a cofactor.

It localises to the cytoplasm. The enzyme catalyses (R)-pantothenate + ATP = (R)-4'-phosphopantothenate + ADP + H(+). The protein operates within cofactor biosynthesis; coenzyme A biosynthesis; CoA from (R)-pantothenate: step 1/5. Functionally, catalyzes the phosphorylation of pantothenate (Pan), the first step in CoA biosynthesis. This Bifidobacterium longum subsp. infantis (strain ATCC 15697 / DSM 20088 / JCM 1222 / NCTC 11817 / S12) protein is Type III pantothenate kinase.